Reading from the N-terminus, the 804-residue chain is Ral guanine nucleotide dissociation stimulator-like 1 (804 aa).

An N-terminal Ras-GEF domain is found at 101–231 (KIRSIRAGTL…RAQSLLEQLR (131 aa)). Residues 270 to 539 (EVDLVAEQLT…YVLSCEVEGL (270 aa)) enclose the Ras-GEF domain. Disordered regions lie at residues 564 to 611 (NDST…TPTH) and 640 to 676 (SASI…GFPP). 2 stretches are compositionally biased toward low complexity: residues 581–607 (PTGS…SDGM) and 640–649 (SASISLASPT). Residues 661–671 (ISLTPLMSPTS) are compositionally biased toward polar residues. The Ras-associating domain maps to 684 to 771 (DACIIRVSLE…FDFLLRLRGS (88 aa)).

Probable guanine nucleotide exchange factor. This is Ral guanine nucleotide dissociation stimulator-like 1 (rgl1) from Danio rerio (Zebrafish).